A 921-amino-acid chain; its full sequence is Phototropin-1B (921 aa).

A compositionally biased stretch (gly residues) spans 1 to 11 (MASKGTEGGHG). Disordered regions lie at residues 1–59 (MASK…SPFL) and 88–118 (TGLP…QSAA). Residues 40–51 (SSASSFRTAAAA) are compositionally biased toward low complexity. Residues 97 to 117 (RPSSGSARTSSEDNPQQQQSA) show a composition bias toward polar residues. In terms of domain architecture, PAS 1 spans 123–197 (VSEELRAALS…KIRQSLANGS (75 aa)). FMN is bound by residues 172–177 (NCRFLQ), Arg-190, Asn-205, Asn-215, and Gln-236. Cys-173 is modified (S-4a-FMN cysteine). Residues 197–251 (SNYCGRILNYKKDGTPFWNLLTIAPIKDEDGRLLKFIGMQVEVSKYTEGKKDTVV) form the PAC 1 domain. Over residues 286–295 (RSLSESSNNT) the composition is skewed to polar residues. Disordered regions lie at residues 286–345 (RSLS…QVNR) and 366–391 (EKNM…SFED). Composition is skewed to basic and acidic residues over residues 312–321 (PSKRSSESGS) and 366–376 (EKNMLKPRDED). The region spanning 400–473 (RGIDLATTLE…RKIRDAIDNQ (74 aa)) is the PAS 2 domain. FMN is bound by residues 449 to 454 (NCRFLQ), Arg-467, Asn-482, Asn-492, and Gln-513. S-4a-FMN cysteine is present on Cys-450. The PAC 2 domain maps to 474–528 (AEVTVQLINYTKSGKKFWNLFHLQPMRDQKGDVQYFIGVQLDGTEHVQDDAAKEG). The Protein kinase domain maps to 594–881 (FRPVKPLGSG…ANEIKGHPFF (288 aa)). Residues 600 to 608 (LGSGDTGSV) and Lys-623 contribute to the ATP site. Catalysis depends on Asp-719, which acts as the Proton acceptor.

The protein belongs to the protein kinase superfamily. Ser/Thr protein kinase family. As to quaternary structure, homodimer. The cofactor is FMN. In terms of processing, autophosphorylated in response to blue light irradiation. Post-translationally, 2 molecules of FMN bind covalently to cysteines after exposure to blue light and are reversed in the dark.

It carries out the reaction L-seryl-[protein] + ATP = O-phospho-L-seryl-[protein] + ADP + H(+). The catalysed reaction is L-threonyl-[protein] + ATP = O-phospho-L-threonyl-[protein] + ADP + H(+). Its function is as follows. Protein kinase that acts as a blue light photoreceptor in a signal-transduction pathway for phototropic responses. Regulates a wide range of physiological activities in plants that maximize the efficiency of photosynthesis, such as chloroplast relocations, stomata opening, and leaf expansion. The polypeptide is Phototropin-1B (PHOT1B) (Oryza sativa subsp. japonica (Rice)).